The primary structure comprises 538 residues: Sucrose transport protein SUT1 (538 aa).

Over 1-52 (MARGSGAGGGGGGGGGGLELSVGVGGGGGARGGGGGEAAAAVETAAPISLGR) the chain is Cytoplasmic. The chain crosses the membrane as a helical span at residues 53-73 (LILSGMVAGGVQYGWALQLSL). Topologically, residues 74–81 (LTPYVQTL) are extracellular. The helical transmembrane segment at 82–102 (GLSHALTSFMWLCGPIAGMVV) threads the bilayer. The Cytoplasmic segment spans residues 103–123 (QPCVGLYSDRCTSKWGRRRPY). A helical transmembrane segment spans residues 124-144 (ILTGCVLICLAVVVIGFSADI). The Extracellular segment spans residues 145-162 (GYAMGDTKEDCSVYHGSR). Residues 163–183 (WHAAIVYVLGFWLLDFSNNTV) form a helical membrane-spanning segment. Over 184–198 (QGPARALMADLSGRH) the chain is Cytoplasmic. A helical membrane pass occupies residues 199-219 (GPGTANSIFCSWMAMGNILGY). Over 220–247 (SSGSTNNWHKWFPFLKTRACCEACANLK) the chain is Extracellular. Residues 248–268 (GAFLVAVIFLSLCLVITLIFA) form a helical membrane-spanning segment. Topologically, residues 269–306 (KEVPFKGNAALPTKSNEPAEPEGTGPLAVLKGFRNLPT) are cytoplasmic. Residues 307-327 (GMPSVLIVTGLTWLSWFPFIL) form a helical membrane-spanning segment. Topologically, residues 328–357 (YDTDWMGREIYHGDPKGTDPQIEAFNQGVR) are extracellular. The helical transmembrane segment at 358-378 (AGAFGLLLNSIVLGFSSFLIE) threads the bilayer. Residues 379–388 (PMCRKVGPRV) are Cytoplasmic-facing. A helical transmembrane segment spans residues 389–409 (VWVTSNFLVCIAMAATALISF). Residues 410-433 (WSLKDFHGTVQKAITADKSIKAVC) lie on the Extracellular side of the membrane. The chain crosses the membrane as a helical span at residues 434–454 (LVLFAFLGVPLAVLYSVPFAV). Residues 455-470 (TAQLAATRGGGQGLCT) lie on the Cytoplasmic side of the membrane. The helical transmembrane segment at 471–491 (GVLNISIVIPQVVIALGAGPW) threads the bilayer. The Extracellular portion of the chain corresponds to 492–499 (DELFGKGN). Residues 500 to 520 (IPAFGLASGFALIGGVAGIFL) form a helical membrane-spanning segment. Over 521–538 (LPKISKRQFRSVSMGGGH) the chain is Cytoplasmic.

It belongs to the glycoside-pentoside-hexuronide (GPH) cation symporter transporter (TC 2.A.2.4) family. As to quaternary structure, homodimer.

It localises to the cell membrane. Its pathway is glycan biosynthesis; sucrose metabolism. Its function is as follows. Responsible for the transport of sucrose into the cell, with the concomitant uptake of protons (symport system). May also transport other glucosides. May be required for apoplastic phloem sucrose loading in source tissues (e.g. leaves) in order to transport it to sink tissues (e.g. roots, flowers). The chain is Sucrose transport protein SUT1 (SUT1) from Oryza sativa subsp. indica (Rice).